We begin with the raw amino-acid sequence, 98 residues long: Large ribosomal subunit protein uL23 (98 aa).

The protein belongs to the universal ribosomal protein uL23 family. Part of the 50S ribosomal subunit. Contacts protein L29, and trigger factor when it is bound to the ribosome.

One of the early assembly proteins it binds 23S rRNA. One of the proteins that surrounds the polypeptide exit tunnel on the outside of the ribosome. Forms the main docking site for trigger factor binding to the ribosome. The chain is Large ribosomal subunit protein uL23 from Saccharophagus degradans (strain 2-40 / ATCC 43961 / DSM 17024).